We begin with the raw amino-acid sequence, 550 residues long: Phosphatidylinositol 4-kinase gamma 2 (550 aa).

2 consecutive Ubiquitin-like domains span residues 34–111 (SVLV…YDPL) and 112–190 (LVTV…VEDT). Positions 228–247 (VDGLNKGSPPVRSAEGTGGT) are disordered. The PI3K/PI4K catalytic domain maps to 234–532 (GSPPVRSAEG…SVLPASSEAT (299 aa)). The interval 240 to 246 (SAEGTGG) is G-loop. Residues 241 to 247 (AEGTGGT), K263, and 359 to 362 (QMFM) contribute to the ATP site. Residues 392–400 (ANADRHAGN) form a catalytic loop region. An activation loop region spans residues 415–441 (PIDHGYCLPENFEDCTFEWLYWPQAKL). D417 provides a ligand contact to ATP.

Belongs to the PI3/PI4-kinase family. Type II PI4K subfamily.

The protein resides in the membrane. It catalyses the reaction a 1,2-diacyl-sn-glycero-3-phospho-(1D-myo-inositol) + ATP = a 1,2-diacyl-sn-glycero-3-phospho-(1D-myo-inositol 4-phosphate) + ADP + H(+). The phosphorylation of phosphatidylinositol (PI) to PI4P is the first committed step in the generation of phosphatidylinositol 4,5-bisphosphate (PIP2), a precursor of the second messenger inositol 1,4,5-trisphosphate (InsP3). The sequence is that of Phosphatidylinositol 4-kinase gamma 2 (PI4KG2) from Arabidopsis thaliana (Mouse-ear cress).